Here is a 347-residue protein sequence, read N- to C-terminus: Haptoglobin (347 aa).

Residues 1 to 18 (MRALGAVVTLLLWGQLFA) form the signal peptide. The 58-residue stretch at 31–88 (DSCPKPPEIANGYVEHLVRYRCRQFYKLQTEGDGIYTLNSEKQWVNPAAGDKLPKCEA) folds into the Sushi domain. 4 disulfide bridges follow: C52-C86, C90-C207, C250-C281, and C292-C322. The region spanning 103–345 (IIGGSMDAKG…LKDWVQETMA (243 aa)) is the Peptidase S1 domain. 2 N-linked (GlcNAc...) asparagine glycosylation sites follow: N148 and N152. An interaction with CD163 region spans residues 259 to 264 (VPEKKG).

Belongs to the peptidase S1 family. Tetramer of two alpha and two beta chains; disulfide-linked. The hemoglobin/haptoglobin complex is composed of a haptoglobin dimer bound to two hemoglobin alpha-beta dimers. Interacts with CD163. Interacts with ERGIC3. In terms of tissue distribution, expressed by the liver and secreted in plasma.

Its subcellular location is the secreted. Its function is as follows. As a result of hemolysis, hemoglobin is found to accumulate in the kidney and is secreted in the urine. Haptoglobin captures, and combines with free plasma hemoglobin to allow hepatic recycling of heme iron and to prevent kidney damage. Haptoglobin also acts as an antioxidant, has antibacterial activity and plays a role in modulating many aspects of the acute phase response. Hemoglobin/haptoglobin complexes are rapidly cleared by the macrophage CD163 scavenger receptor expressed on the surface of liver Kupfer cells through an endocytic lysosomal degradation pathway. The sequence is that of Haptoglobin (Hp) from Rattus norvegicus (Rat).